The sequence spans 72 residues: Toxin Acra II-1 (72 aa).

Positions 3–67 constitute an LCN-type CS-alpha/beta domain; sequence VPGNYPLNTY…VWNAAKNYCK (65 aa). 3 disulfides stabilise this stretch: C18/C41, C27/C46, and C31/C48.

It belongs to the long (3 C-C) scorpion toxin superfamily. Sodium channel inhibitor family. Beta subfamily. In terms of tissue distribution, expressed by the venom gland.

The protein localises to the secreted. Its function is as follows. Binds to sodium channels (Nav) and affects the channel activation process. The chain is Toxin Acra II-1 from Androctonus crassicauda (Arabian fat-tailed scorpion).